A 228-amino-acid polypeptide reads, in one-letter code: Small ribosomal subunit protein uS2c (228 aa).

This sequence belongs to the universal ribosomal protein uS2 family.

It is found in the plastid. Its subcellular location is the chloroplast. This Mesostigma viride (Green alga) protein is Small ribosomal subunit protein uS2c (rps2).